The sequence spans 322 residues: Sideroflexin-1 (322 aa).

The residue at position 2 (S2) is an N-acetylserine. At 2–102 (SGELPPNINI…MSAQVPMNMT (101 aa)) the chain is on the mitochondrial matrix side. Residues 103-120 (ITGCMMTFYRTTPAVLFW) form a helical membrane-spanning segment. Residues 121 to 146 (QWINQSFNAVVNYTNRSGDAPLTVNE) are Mitochondrial intermembrane-facing. Residues 147-167 (LGTAYVSATTGAVATALGLNA) form a helical membrane-spanning segment. Residues 168-174 (LTKHVSP) are Mitochondrial matrix-facing. The helical transmembrane segment at 175 to 195 (LIGRFVPFAAVAAANCINIPL) threads the bilayer. At 196-228 (MRQRELKVGIPVTDENGNRLGESANAAKQAITQ) the chain is on the mitochondrial intermembrane side. Residues 229–249 (VVVSRILMAAPGMAIPPFIMN) form a helical membrane-spanning segment. The Mitochondrial matrix segment spans residues 250 to 266 (TLEKKAFLKRFPWMSAP). A helical transmembrane segment spans residues 267–287 (VQVGIVGFCLVFATPLCCALF). Residues 288–322 (PQKSSMSVTSLEAELQARIRETYPELRRVYFNKGL) are Mitochondrial intermembrane-facing.

The protein belongs to the sideroflexin family.

It localises to the mitochondrion inner membrane. The catalysed reaction is L-serine(in) = L-serine(out). It carries out the reaction L-alanine(in) = L-alanine(out). It catalyses the reaction L-cysteine(in) = L-cysteine(out). Its function is as follows. Amino acid transporter importing serine, an essential substrate of the mitochondrial branch of the one-carbon pathway, into mitochondria. Mitochondrial serine is then converted to glycine and formate, which exits to the cytosol where it is used to generate the charged folates that serve as one-carbon donors. May also transport other amino acids including alanine and cysteine. This chain is Sideroflexin-1 (SFXN1), found in Bos taurus (Bovine).